Here is a 355-residue protein sequence, read N- to C-terminus: Putative early 40.3 kDa protein (355 aa).

This protein is required for viral late gene expression. The sequence is that of Putative early 40.3 kDa protein (DA41) from Orgyia pseudotsugata multicapsid polyhedrosis virus (OpMNPV).